The sequence spans 513 residues: ATP synthase subunit alpha (513 aa).

169–176 (GDRQTGKT) contacts ATP.

The protein belongs to the ATPase alpha/beta chains family. In terms of assembly, F-type ATPases have 2 components, CF(1) - the catalytic core - and CF(0) - the membrane proton channel. CF(1) has five subunits: alpha(3), beta(3), gamma(1), delta(1), epsilon(1). CF(0) has three main subunits: a(1), b(2) and c(9-12). The alpha and beta chains form an alternating ring which encloses part of the gamma chain. CF(1) is attached to CF(0) by a central stalk formed by the gamma and epsilon chains, while a peripheral stalk is formed by the delta and b chains.

It is found in the cell inner membrane. The enzyme catalyses ATP + H2O + 4 H(+)(in) = ADP + phosphate + 5 H(+)(out). In terms of biological role, produces ATP from ADP in the presence of a proton gradient across the membrane. The alpha chain is a regulatory subunit. This chain is ATP synthase subunit alpha, found in Cupriavidus metallidurans (strain ATCC 43123 / DSM 2839 / NBRC 102507 / CH34) (Ralstonia metallidurans).